The primary structure comprises 224 residues: LexA repressor (224 aa).

Positions 31–51 form a DNA-binding region, H-T-H motif; the sequence is RAEIANTLGFKSANAAEEHLQ. Catalysis depends on for autocatalytic cleavage activity residues Ser-142 and Lys-179.

This sequence belongs to the peptidase S24 family. In terms of assembly, homodimer.

The enzyme catalyses Hydrolysis of Ala-|-Gly bond in repressor LexA.. Functionally, represses a number of genes involved in the response to DNA damage (SOS response), including recA and lexA. In the presence of single-stranded DNA, RecA interacts with LexA causing an autocatalytic cleavage which disrupts the DNA-binding part of LexA, leading to derepression of the SOS regulon and eventually DNA repair. The polypeptide is LexA repressor (Delftia acidovorans (strain DSM 14801 / SPH-1)).